Reading from the N-terminus, the 419-residue chain is Histidine--tRNA ligase (419 aa).

Belongs to the class-II aminoacyl-tRNA synthetase family. In terms of assembly, homodimer.

Its subcellular location is the cytoplasm. It catalyses the reaction tRNA(His) + L-histidine + ATP = L-histidyl-tRNA(His) + AMP + diphosphate + H(+). The sequence is that of Histidine--tRNA ligase from Methylobacillus flagellatus (strain ATCC 51484 / DSM 6875 / VKM B-1610 / KT).